Consider the following 349-residue polypeptide: Protein RecA (349 aa).

Residue 65–72 participates in ATP binding; the sequence is GPESSGKT.

The protein belongs to the RecA family.

Its subcellular location is the cytoplasm. Functionally, can catalyze the hydrolysis of ATP in the presence of single-stranded DNA, the ATP-dependent uptake of single-stranded DNA by duplex DNA, and the ATP-dependent hybridization of homologous single-stranded DNAs. It interacts with LexA causing its activation and leading to its autocatalytic cleavage. The chain is Protein RecA from Vibrio vulnificus (strain CMCP6).